The sequence spans 124 residues: 14 kDa phosphohistidine phosphatase (124 aa).

Lysine 20 serves as a coordination point for substrate. The Proton acceptor role is filled by histidine 52. 93–95 (SMG) lines the substrate pocket.

This sequence belongs to the janus family. In terms of assembly, monomer.

Its subcellular location is the cytoplasm. It carries out the reaction N(pros)-phospho-L-histidyl-[protein] + H2O = L-histidyl-[protein] + phosphate. The catalysed reaction is N(tele)-phospho-L-histidyl-[protein] + H2O = L-histidyl-[protein] + phosphate. Functionally, exhibits phosphohistidine phosphatase activity. This is 14 kDa phosphohistidine phosphatase (Phpt1) from Mus musculus (Mouse).